The chain runs to 433 residues: 23S rRNA (uracil(1939)-C(5))-methyltransferase RlmD (433 aa).

Residues 10 to 68 enclose the TRAM domain; the sequence is RTTTRQIITVSVNDLDSFGQGVARHNGKTLFIPGLLPQENAEVTVTEDKKQYARAKVVR. [4Fe-4S] cluster is bound by residues Cys81, Cys87, Cys90, and Cys162. Gln265, Phe294, Asn299, Glu315, Asn342, and Asp363 together coordinate S-adenosyl-L-methionine. Cys389 functions as the Nucleophile in the catalytic mechanism.

It belongs to the class I-like SAM-binding methyltransferase superfamily. RNA M5U methyltransferase family. RlmD subfamily.

It carries out the reaction uridine(1939) in 23S rRNA + S-adenosyl-L-methionine = 5-methyluridine(1939) in 23S rRNA + S-adenosyl-L-homocysteine + H(+). Its function is as follows. Catalyzes the formation of 5-methyl-uridine at position 1939 (m5U1939) in 23S rRNA. The sequence is that of 23S rRNA (uracil(1939)-C(5))-methyltransferase RlmD from Shigella boydii serotype 4 (strain Sb227).